A 416-amino-acid chain; its full sequence is MKADVIVGIQWGDEGKGKIVDMLAQKYDMVCRSQGGHNAGHTIWVDGVRYALQLIPSGILNPKAVNVIGNGVVVSPLNIIKEMSQFSSLEGRLFISDKAHLNLPFHALIDQAKERLKGDKAIGTTGKGIGPTYAEKVSRTGFRMGELLNPIKLCDDILEYFKQNRSIFDVLDISTPNKDELLAELNEYKEKLSPFITNTTNLVWKAIDENKRILLEGAQGTMLDIDHGTYPYVTSSSTVSAGSCTGLGINPKDIGVITGIVKAYCTRVGNGPFPTEDFTEAGKTIGEVGKEFGTVTGRKRRCGWFDAVAVRYASRLNGCDQLALMKLDVLDGFSKIKVCVAYELDGERIDYMPSDMQNVKPIYEEIDGWDSVVGIQDFDKLPVNAKKYIEKIEEITSVKVGIISTSPERADTIIRG.

Residues Gly-12–Lys-18 and Gly-40–Thr-42 contribute to the GTP site. Residue Asp-13 is the Proton acceptor of the active site. Residues Asp-13 and Gly-40 each contribute to the Mg(2+) site. Residues Asp-13–Lys-16, Asn-38–His-41, Thr-125, Arg-139, Gln-219, Thr-234, and Arg-298 contribute to the IMP site. His-41 acts as the Proton donor in catalysis. Position 294–300 (Thr-294–Arg-300) interacts with substrate. GTP contacts are provided by residues Arg-300, Lys-326–Asp-328, and Ser-404–Ser-406.

Belongs to the adenylosuccinate synthetase family. As to quaternary structure, homodimer. Mg(2+) is required as a cofactor.

The protein localises to the cytoplasm. The enzyme catalyses IMP + L-aspartate + GTP = N(6)-(1,2-dicarboxyethyl)-AMP + GDP + phosphate + 2 H(+). The protein operates within purine metabolism; AMP biosynthesis via de novo pathway; AMP from IMP: step 1/2. In terms of biological role, plays an important role in the de novo pathway of purine nucleotide biosynthesis. Catalyzes the first committed step in the biosynthesis of AMP from IMP. This is Adenylosuccinate synthetase from Aliarcobacter butzleri (strain RM4018) (Arcobacter butzleri).